The primary structure comprises 375 residues: MTLQATPLNAIHRALGARMVDFGGWDMPVNYGSQIEEHNAVRADAGMFDVSHMCVVDLSGIHARAFLRGLLANNIDKLQTPGKALYSCMLDEKGGVIDDLIVYFFAEDRFRLVVNASTAVGDIEWIQSRNTATGSGVTITPRRGDLAPACVSKLAIVAVQGPNARQKVYDAFPSTQPADTLKPFNAVVVHDAEMGELMVARTGYTGEDGFELVVPAENVAGIWEKLSASGVRPAGLGARDTLRLEAGMNLYGQDMDIHTSPLDAGLSWTVDLQSERDFIGKSALLASGQQKTFAGLILRDKGGVLRAHQKVITPAGDGEITSGTFSPSLSQSIAFARLPRDIAPGTEVQVEIRDRKLTATVVKLPFVRNGKALVS.

Belongs to the GcvT family. In terms of assembly, the glycine cleavage system is composed of four proteins: P, T, L and H.

The enzyme catalyses N(6)-[(R)-S(8)-aminomethyldihydrolipoyl]-L-lysyl-[protein] + (6S)-5,6,7,8-tetrahydrofolate = N(6)-[(R)-dihydrolipoyl]-L-lysyl-[protein] + (6R)-5,10-methylene-5,6,7,8-tetrahydrofolate + NH4(+). In terms of biological role, the glycine cleavage system catalyzes the degradation of glycine. This is Aminomethyltransferase from Cupriavidus metallidurans (strain ATCC 43123 / DSM 2839 / NBRC 102507 / CH34) (Ralstonia metallidurans).